Here is a 261-residue protein sequence, read N- to C-terminus: Cytochrome c oxidase subunit 3 (261 aa).

Topologically, residues 1–15 are mitochondrial matrix; sequence MAHQAHAYHMVDPSP. Residues 16–34 traverse the membrane as a helical segment; that stretch reads WPLTGAVAALLMSSGLAIW. Residues 35–40 are Mitochondrial intermembrane-facing; sequence FHLHSM. A helical transmembrane segment spans residues 41 to 66; it reads TLIVLGMILLILTMIQWWRDIIREGT. Topologically, residues 67 to 72 are mitochondrial matrix; the sequence is FQGHHT. A helical transmembrane segment spans residues 73 to 105; the sequence is PPVQKGLRYGMILFITSEVFFFLGFFWAFYHSS. Residues 106–128 are Mitochondrial intermembrane-facing; that stretch reads LAPTPELGGCWPPTGLTTLDPFE. A helical transmembrane segment spans residues 129 to 152; the sequence is VPLLNTAVLLASGVTVTWAHHSLM. The Mitochondrial matrix segment spans residues 153–155; it reads EGE. The helical transmembrane segment at 156–183 threads the bilayer; it reads RKQAIQSLALTILLGLYFTALQAMEYYE. The Mitochondrial intermembrane segment spans residues 184–190; it reads APFTIAD. Residues 191-223 traverse the membrane as a helical segment; it reads GVYGSTFFVATGFHGLHVIIGSTFLAVCLLRQV. Over 224–232 the chain is Mitochondrial matrix; the sequence is LFHFTSDHH. Residues 233 to 256 traverse the membrane as a helical segment; the sequence is FGFEAAAWYWHFVDVVWLFLYVSI. Over 257–261 the chain is Mitochondrial intermembrane; that stretch reads YWWGS.

The protein belongs to the cytochrome c oxidase subunit 3 family. Component of the cytochrome c oxidase (complex IV, CIV), a multisubunit enzyme composed of 14 subunits. The complex is composed of a catalytic core of 3 subunits MT-CO1, MT-CO2 and MT-CO3, encoded in the mitochondrial DNA, and 11 supernumerary subunits COX4I, COX5A, COX5B, COX6A, COX6B, COX6C, COX7A, COX7B, COX7C, COX8 and NDUFA4, which are encoded in the nuclear genome. The complex exists as a monomer or a dimer and forms supercomplexes (SCs) in the inner mitochondrial membrane with NADH-ubiquinone oxidoreductase (complex I, CI) and ubiquinol-cytochrome c oxidoreductase (cytochrome b-c1 complex, complex III, CIII), resulting in different assemblies (supercomplex SCI(1)III(2)IV(1) and megacomplex MCI(2)III(2)IV(2)).

The protein resides in the mitochondrion inner membrane. The enzyme catalyses 4 Fe(II)-[cytochrome c] + O2 + 8 H(+)(in) = 4 Fe(III)-[cytochrome c] + 2 H2O + 4 H(+)(out). In terms of biological role, component of the cytochrome c oxidase, the last enzyme in the mitochondrial electron transport chain which drives oxidative phosphorylation. The respiratory chain contains 3 multisubunit complexes succinate dehydrogenase (complex II, CII), ubiquinol-cytochrome c oxidoreductase (cytochrome b-c1 complex, complex III, CIII) and cytochrome c oxidase (complex IV, CIV), that cooperate to transfer electrons derived from NADH and succinate to molecular oxygen, creating an electrochemical gradient over the inner membrane that drives transmembrane transport and the ATP synthase. Cytochrome c oxidase is the component of the respiratory chain that catalyzes the reduction of oxygen to water. Electrons originating from reduced cytochrome c in the intermembrane space (IMS) are transferred via the dinuclear copper A center (CU(A)) of subunit 2 and heme A of subunit 1 to the active site in subunit 1, a binuclear center (BNC) formed by heme A3 and copper B (CU(B)). The BNC reduces molecular oxygen to 2 water molecules using 4 electrons from cytochrome c in the IMS and 4 protons from the mitochondrial matrix. The polypeptide is Cytochrome c oxidase subunit 3 (mt-co3) (Danio rerio (Zebrafish)).